A 159-amino-acid chain; its full sequence is Protein-export protein SecB (159 aa).

It belongs to the SecB family. Homotetramer, a dimer of dimers. One homotetramer interacts with 1 SecA dimer.

The protein resides in the cytoplasm. In terms of biological role, one of the proteins required for the normal export of preproteins out of the cell cytoplasm. It is a molecular chaperone that binds to a subset of precursor proteins, maintaining them in a translocation-competent state. It also specifically binds to its receptor SecA. In Pseudomonas fluorescens (strain SBW25), this protein is Protein-export protein SecB.